The chain runs to 622 residues: MENRIKRPRVDGECVKSINNGEFDRWDVEDTVAYLRGEGLQEWAQIFKDNGITGAGLLCLTEAHLEKMGVSPLGARLHILHCLQKLSQISTEPMKVFNDPIHGHIELHPLLLHFIDTPQFQRLRHIKQLGGTYLVFPGASHNRFEHSIGVGYLAGCLVKALNERQPELFITKQDILCVQIAGLCHDLGHGPFSHMFDGMFIPKARPADKWKHEIASVQMFDHLVEVNGLEAVMLHHGMRLPEDLIFIKEQIAGPLESAVLDQSQWPYKGRPVEKSFLYEVVANKRNGIDVDKWDYFARDCYHLGIQNNFDYQRFLRFARVCEVKGRKHICTRDKEVGNLYDMFHTRNCLHRRAYQHKVGNIIETMITEAFLKADPHIQIQGSSGRIFTISSAIEDMEAYSKLTDHIFEQILYSSGPELSEARAILQNIICRRLYKCVGQTTSETNVDVSQEKLLDWAKELARSKPTGTEGNLIAEDFVVSVIHMDYGMKEKNPINNVHFYCKNDPTKAIKIHKKQVSKLLPERFAEQLIRVYCKKTDDKSLEAAKKYFVQWCMDRNFTKPQDGDIIAPELTPLKQDWHAREDEDEEEEEKHRQNQTLPHHTPQRTGRNVKVDLFQARGETKL.

The SAM domain maps to W26–I89. The GTP site is built by K95 and V96. Residue N98 coordinates dGTP. Positions 116, 121, and 124 each coordinate GTP. 4 residues coordinate dGTP: Q128, L129, V135, and R143. Q128 contributes to the dATP binding site. Q128 serves as a coordination point for dCTP. Q128 is a binding site for dTTP. Residue R143 coordinates dATP. R143 serves as a coordination point for dCTP. R143 serves as a coordination point for dTTP. Positions R143–F296 constitute an HD domain. Residues H146, H185, and D186 each coordinate Mn(2+). Residues H189 and H194 each contribute to the dATP site. H189 and H194 together coordinate dCTP. The dTTP site is built by H189 and H194. H212 is an active-site residue. Residue D291 coordinates Mn(2+). Positions 292, 295, 299, 313, 332, 334, 338, 346, 354, 355, 356, and 357 each coordinate dGTP. Residues K292, Y295, and D299 each contribute to the dATP site. 3 residues coordinate dCTP: K292, Y295, and D299. Residues K292, Y295, and D299 each coordinate dTTP. R346 serves as a coordination point for dATP. R346 contacts dCTP. Q355 serves as a coordination point for dATP. Residue Q355 participates in dCTP binding. Q355 is a dTTP binding site. The GTP site is built by R431, K435, and K502. Position 502 (K502) interacts with dGTP. A disordered region spans residues T571–L622. A compositionally biased stretch (polar residues) spans N594–G606.

The protein belongs to the SAMHD1 family. As to quaternary structure, homodimer; in absence of GTP and dNTP. Homotetramer; in GTP- and dNTP-bound form. Interacts with rbbp8/CtIP. It depends on Zn(2+) as a cofactor.

The protein resides in the nucleus. It is found in the chromosome. It catalyses the reaction a 2'-deoxyribonucleoside 5'-triphosphate + H2O = a 2'-deoxyribonucleoside + triphosphate + H(+). The enzyme catalyses dATP + H2O = 2'-deoxyadenosine + triphosphate + H(+). The catalysed reaction is dCTP + H2O = 2'-deoxycytidine + triphosphate + H(+). It carries out the reaction dGTP + H2O = 2'-deoxyguanosine + triphosphate + H(+). It catalyses the reaction dTTP + H2O = thymidine + triphosphate + H(+). Allosterically activated and regulated via the combined actions of GTP and dNTPs (dATP, dGTP, dTTP and dCTP): Allosteric site 1 binds GTP, while allosteric site 2 binds dNTP. Allosteric activation promotes the formation of highly active homotetramers. Its function is as follows. Protein that acts both as a host restriction factor involved in defense response to virus and as a regulator of DNA end resection at stalled replication forks. Has deoxynucleoside triphosphate (dNTPase) activity, which is required to restrict infection by viruses: dNTPase activity reduces cellular dNTP levels to levels too low for retroviral reverse transcription to occur, blocking early-stage virus replication in dendritic and other myeloid cells. Functions during S phase at stalled DNA replication forks to promote the resection of gapped or reversed forks: acts by stimulating the exonuclease activity of MRE11, activating the ATR-CHK1 pathway and allowing the forks to restart replication. Its ability to promote degradation of nascent DNA at stalled replication forks is required to prevent induction of type I interferons, thereby preventing chronic inflammation. Ability to promote DNA end resection at stalled replication forks is independent of dNTPase activity. This Danio rerio (Zebrafish) protein is Deoxynucleoside triphosphate triphosphohydrolase SAMHD1.